The following is a 424-amino-acid chain: MRAPGCGRLVLPLLLLAAAALAEGDAKGLKEGETPGNFMEDEQWLSSISQYSGKIKHWNRFRDEVEDDYIKSWEDNQQGDEALDTTKDPCQKVKCSRHKVCIAQGYQRAMCISRKKLEHRIKQPTVKLHGNKDSICKPCHMAQLASVCGSDGHTYSSVCKLEQQACLSSKQLAVRCEGPCPCPTEQAATSTADGKPETCTGQDLADLGDRLRDWFQLLHENSKQNGSASSVAGPASGLDKSLGASCKDSIGWMFSKLDTSADLFLDQTELAAINLDKYEVCIRPFFNSCDTYKDGRVSTAEWCFCFWREKPPCLAELERIQIQEAAKKKPGIFIPSCDEDGYYRKMQCDQSSGDCWCVDQLGLELTGTRTHGSPDCDDIVGFSGDFGSGVGWEDEEEKETEEAGEEAEEEEGEAGEADDGGYIW.

The N-terminal stretch at 1 to 22 (MRAPGCGRLVLPLLLLAAAALA) is a signal peptide. The residue at position 72 (Ser72) is a Phosphoserine; by FAM20C. Disulfide bonds link Cys90–Cys101, Cys95–Cys111, Cys136–Cys166, Cys139–Cys159, and Cys148–Cys180. The region spanning 130–182 (GNKDSICKPCHMAQLASVCGSDGHTYSSVCKLEQQACLSSKQLAVRCEGPCPC) is the Kazal-like domain. N-linked (GlcNAc...) asparagine glycosylation is present at Asn225. The 67-residue stretch at 310–376 (KPPCLAELER…GTRTHGSPDC (67 aa)) folds into the Thyroglobulin type-1 domain. Cystine bridges form between Cys313–Cys337, Cys348–Cys355, and Cys357–Cys376. O-linked (Xyl...) (glycosaminoglycan) serine glycosylation is found at Ser383 and Ser388. The interval 387 to 424 (GSGVGWEDEEEKETEEAGEEAEEEEGEAGEADDGGYIW) is disordered. Residues 392 to 424 (WEDEEEKETEEAGEEAEEEEGEAGEADDGGYIW) show a composition bias toward acidic residues.

Post-translationally, contains chondroitin sulfate and heparan sulfate O-linked oligosaccharides. In terms of tissue distribution, highly expressed in brain. Also found in lung and testis.

Its subcellular location is the secreted. The protein localises to the extracellular space. It localises to the extracellular matrix. Its function is as follows. May participate in diverse steps of neurogenesis. Binds calcium. In Homo sapiens (Human), this protein is Testican-2 (SPOCK2).